The sequence spans 339 residues: DNA-directed RNA polymerase subunit alpha (339 aa).

The segment at 1-233 (MVREEVAGST…DLFLPFLHAE (233 aa)) is alpha N-terminal domain (alpha-NTD). The alpha C-terminal domain (alpha-CTD) stretch occupies residues 264–339 (KKGIPLNYIF…IDLLKNKLSF (76 aa)).

The protein belongs to the RNA polymerase alpha chain family. In plastids the minimal PEP RNA polymerase catalytic core is composed of four subunits: alpha, beta, beta', and beta''. When a (nuclear-encoded) sigma factor is associated with the core the holoenzyme is formed, which can initiate transcription.

The protein resides in the plastid. It is found in the chloroplast. It carries out the reaction RNA(n) + a ribonucleoside 5'-triphosphate = RNA(n+1) + diphosphate. Functionally, DNA-dependent RNA polymerase catalyzes the transcription of DNA into RNA using the four ribonucleoside triphosphates as substrates. This chain is DNA-directed RNA polymerase subunit alpha, found in Psathyrostachys rupestris (Hordeum rupestre).